Reading from the N-terminus, the 392-residue chain is Protein O-glucosyltransferase 1 (392 aa).

Residues 1–23 (MEWWASSPLRLWLLLFLLPSAQG) form the signal peptide. N-linked (GlcNAc...) asparagine glycosylation is found at asparagine 40 and asparagine 53. Intrachain disulfides connect cysteine 49–cysteine 56, cysteine 54–cysteine 357, cysteine 102–cysteine 108, and cysteine 263–cysteine 286. The interval 103–107 (MFPSR) is interaction with the consensus sequence C-X-S-X-[PA]-C in peptide substrates. Catalysis depends on aspartate 133, which acts as the Proton donor/acceptor. The segment at 172 to 178 (AVWPIYP) is interaction with the consensus sequence C-X-S-X-[PA]-C in peptide substrates. Tyrosine 177 provides a ligand contact to UDP-alpha-D-glucose. A glycan (N-linked (GlcNAc...) asparagine) is linked at asparagine 204. Residues serine 212, arginine 218, and 274–279 (VAASFR) each bind UDP-alpha-D-glucose. The N-linked (GlcNAc...) asparagine glycan is linked to asparagine 373. Positions 389 to 392 (KTEL) match the Prevents secretion from ER motif.

This sequence belongs to the glycosyltransferase 90 family. In terms of tissue distribution, expressed in most adult tissues at different intensities. Abundantly expressed in liver. Expressed also in brain, heart, skeletal muscle, spleen, kidney, placenta, lung and peripheral blood leukocyte. Not detectable in colon, thymus and small intestine. Expressed in the epidermis, especially in the upper parts, stratum spinosum and stratum granulosum (at protein level).

The protein localises to the endoplasmic reticulum lumen. It carries out the reaction L-seryl-[EGF-like domain protein] + UDP-alpha-D-xylose = 3-O-(beta-D-xylosyl)-L-seryl-[EGF-like domain protein] + UDP + H(+). The catalysed reaction is L-seryl-[EGF-like domain protein] + UDP-alpha-D-glucose = 3-O-(beta-D-glucosyl)-L-seryl-[EGF-like domain protein] + UDP + H(+). Its pathway is protein modification; protein glycosylation. Functionally, dual specificity glycosyltransferase that catalyzes the transfer of glucose and xylose from UDP-glucose and UDP-xylose, respectively, to a serine residue found in the consensus sequence of C-X-S-X-P-C. Specifically targets extracellular EGF repeats of protein such as CRB2, F7, F9 and NOTCH2. Acts as a positive regulator of Notch signaling by mediating O-glucosylation of Notch, leading to regulate muscle development. Notch glucosylation does not affect Notch ligand binding. Required during early development to promote gastrulation: acts by mediating O-glucosylation of CRB2, which is required for CRB2 localization to the cell membrane. The chain is Protein O-glucosyltransferase 1 from Homo sapiens (Human).